The chain runs to 449 residues: Asparagine--tRNA ligase (449 aa).

The protein belongs to the class-II aminoacyl-tRNA synthetase family. As to quaternary structure, homodimer.

The protein resides in the cytoplasm. The catalysed reaction is tRNA(Asn) + L-asparagine + ATP = L-asparaginyl-tRNA(Asn) + AMP + diphosphate + H(+). This chain is Asparagine--tRNA ligase, found in Mesomycoplasma hyopneumoniae (strain 232) (Mycoplasma hyopneumoniae).